The primary structure comprises 628 residues: ATP-dependent zinc metalloprotease FtsH 4 (628 aa).

Residues 1–14 (MAIKPQPQWQRRLA) lie on the Cytoplasmic side of the membrane. The helical transmembrane segment at 15 to 35 (SVLLWGSTIYLLVNLLAPALF) threads the bilayer. Over 36 to 119 (RSQPPQVPYS…AAAPPAKNSW (84 aa)) the chain is Lumenal. A helical membrane pass occupies residues 120–140 (FGTLLSWVIPPLIFVGIWSFF). Over 141-628 (LNRNNNGAPG…QVQAPGTLVV (488 aa)) the chain is Cytoplasmic. Position 214-221 (214-221 (GPPGTGKT)) interacts with ATP. Histidine 438 contributes to the Zn(2+) binding site. Residue glutamate 439 is part of the active site. Residues histidine 442 and aspartate 515 each coordinate Zn(2+).

It in the central section; belongs to the AAA ATPase family. This sequence in the C-terminal section; belongs to the peptidase M41 family. In terms of assembly, homohexamer. Requires Zn(2+) as cofactor.

The protein resides in the cellular thylakoid membrane. Acts as a processive, ATP-dependent zinc metallopeptidase for both cytoplasmic and membrane proteins. Plays a role in the quality control of integral membrane proteins. The protein is ATP-dependent zinc metalloprotease FtsH 4 of Synechocystis sp. (strain ATCC 27184 / PCC 6803 / Kazusa).